Here is a 360-residue protein sequence, read N- to C-terminus: 3-dehydroquinate synthase (360 aa).

Residues 70-75, 104-108, 128-129, lysine 141, and lysine 150 each bind NAD(+); these read DGEKYK, GVIGD, and TT. Zn(2+) contacts are provided by glutamate 183, histidine 246, and histidine 263.

Belongs to the sugar phosphate cyclases superfamily. Dehydroquinate synthase family. Requires Co(2+) as cofactor. Zn(2+) serves as cofactor. It depends on NAD(+) as a cofactor.

It is found in the cytoplasm. The catalysed reaction is 7-phospho-2-dehydro-3-deoxy-D-arabino-heptonate = 3-dehydroquinate + phosphate. It participates in metabolic intermediate biosynthesis; chorismate biosynthesis; chorismate from D-erythrose 4-phosphate and phosphoenolpyruvate: step 2/7. Catalyzes the conversion of 3-deoxy-D-arabino-heptulosonate 7-phosphate (DAHP) to dehydroquinate (DHQ). The protein is 3-dehydroquinate synthase of Acinetobacter baumannii (strain SDF).